Reading from the N-terminus, the 726-residue chain is Polymerase acidic protein (726 aa).

Mn(2+) is bound by residues histidine 41, glutamate 81, aspartate 109, glutamate 120, and valine 121. Residues 125-140 (KGLADDYFWKKKEKLG) carry the Nuclear localization signal 1 (NLS1) motif. Positions 183 to 244 (LKNLWQVLIG…PKGAIERNLA (62 aa)) match the Nuclear localization signal 2 (NLS2) motif.

Belongs to the influenza viruses PA family. Influenza RNA polymerase is composed of three subunits: PB1, PB2 and PA. Interacts (via C-terminus) with PB1 (via N-terminus). Mn(2+) is required as a cofactor. Phosphorylated on serines and threonines by host kinases, including human casein kinase II.

The protein localises to the host cytoplasm. Its subcellular location is the host nucleus. Functionally, plays an essential role in viral RNA transcription and replication by forming the heterotrimeric polymerase complex together with PB1 and PB2 subunits. The complex transcribes viral mRNAs by using a unique mechanism called cap-snatching. It consists in the hijacking and cleavage of host capped pre-mRNAs. These short capped RNAs are then used as primers for viral mRNAs. The PB2 subunit is responsible for the binding of the 5' cap of cellular pre-mRNAs which are subsequently cleaved after 10-13 nucleotides by the PA subunit that carries the endonuclease activity. The chain is Polymerase acidic protein from Influenza B virus (strain B/Lee/1940).